Reading from the N-terminus, the 633-residue chain is Chaperone protein HtpG (633 aa).

The tract at residues 1–341 (MTAPHETMSF…SADLPLNVSR (341 aa)) is a; substrate-binding. Positions 342–562 (ELLQESRDVK…EGDMSGYLQR (221 aa)) are b. The c stretch occupies residues 563–633 (LLKQAGQKAP…YVQRVNKLLA (71 aa)).

It belongs to the heat shock protein 90 family. As to quaternary structure, homodimer.

The protein resides in the cytoplasm. Molecular chaperone. Has ATPase activity. This is Chaperone protein HtpG from Cupriavidus taiwanensis (strain DSM 17343 / BCRC 17206 / CCUG 44338 / CIP 107171 / LMG 19424 / R1) (Ralstonia taiwanensis (strain LMG 19424)).